Reading from the N-terminus, the 160-residue chain is Phosphopantetheine adenylyltransferase (160 aa).

Threonine 10 is a binding site for substrate. Residues 10–11 and histidine 18 contribute to the ATP site; that span reads TF. Residues lysine 42, leucine 74, and arginine 88 each coordinate substrate. ATP contacts are provided by residues 89-91, glutamate 99, and 124-130; these read GLR and NSFISST.

The protein belongs to the bacterial CoaD family. As to quaternary structure, homohexamer. It depends on Mg(2+) as a cofactor.

The protein localises to the cytoplasm. It catalyses the reaction (R)-4'-phosphopantetheine + ATP + H(+) = 3'-dephospho-CoA + diphosphate. It participates in cofactor biosynthesis; coenzyme A biosynthesis; CoA from (R)-pantothenate: step 4/5. Functionally, reversibly transfers an adenylyl group from ATP to 4'-phosphopantetheine, yielding dephospho-CoA (dPCoA) and pyrophosphate. In Pseudoalteromonas atlantica (strain T6c / ATCC BAA-1087), this protein is Phosphopantetheine adenylyltransferase.